Reading from the N-terminus, the 146-residue chain is MATFHRAHATSSVKPRARRHQEPNSGDWPGSYRAGTRCSAIGFRLLHSPQHWRPRSLGAGQGREDPSWEGGALGDLKALWDQPCQPPPWVQLQLSSAYGARQQRWQLSTLPEPPAARTPGQMPQQRLIRAAGPSAAGGGNQWLSPM.

Disordered stretches follow at residues 1–33 and 50–70; these read MATF…GSYR and QHWR…SWEG.

This is an uncharacterized protein from Homo sapiens (Human).